A 58-amino-acid chain; its full sequence is Large ribosomal subunit protein bL32 (58 aa).

It belongs to the bacterial ribosomal protein bL32 family.

The chain is Large ribosomal subunit protein bL32 from Caldicellulosiruptor saccharolyticus (strain ATCC 43494 / DSM 8903 / Tp8T 6331).